The primary structure comprises 233 residues: Homeobox protein ceh-30 (233 aa).

The span at 50-85 (NNSTYSHDLDPSPQSVRSDLSTSPRASSPDRNSPMS) shows a compositional bias: polar residues. Disordered regions lie at residues 50-93 (NNST…KART) and 206-233 (FQAT…SNSD). Positions 88 to 147 (SRKARTIFTDKQLQELENTFEKQKYLSVQDRMDLAHRMGLSDTQVKTWYQNRRTKWKRQA) form a DNA-binding region, homeobox. The span at 224-233 (PQLDVSSNSD) shows a compositional bias: polar residues.

The protein resides in the nucleus. In terms of biological role, cell-type specific anti-apoptotic transcription factor required for the sexually dimorphic survival of the male-specific CEM (cephalic male) sensory neurons during sex determination. In hermaphrodites, the homologous cells undergo programmed cell death due to transcriptional repression of ceh-30 by tra-1, the terminal regulator in the sex determination pathway. The polypeptide is Homeobox protein ceh-30 (Caenorhabditis briggsae).